The primary structure comprises 609 residues: UvrABC system protein C (609 aa).

A GIY-YIG domain is found at 15–92 (TGSGVYQMQD…IKQFRPRYNV (78 aa)). One can recognise a UVR domain in the interval 202 to 237 (DQVIIKLTERMEVASENLVFEEAAHYRDQIRQLRRL).

The protein belongs to the UvrC family. In terms of assembly, interacts with UvrB in an incision complex.

The protein resides in the cytoplasm. In terms of biological role, the UvrABC repair system catalyzes the recognition and processing of DNA lesions. UvrC both incises the 5' and 3' sides of the lesion. The N-terminal half is responsible for the 3' incision and the C-terminal half is responsible for the 5' incision. The protein is UvrABC system protein C of Coxiella burnetii (strain RSA 331 / Henzerling II).